Here is a 728-residue protein sequence, read N- to C-terminus: MAGRARSEDEEEDGQFTEHDYDVSLQKGPKKPWSKLRWTKDEDDKVKKLVEKHGEDWGVVARHFINRSEVQCQHRWHKVLSPELVKGPWTKEEDQRVIELVHKYGPKKWSIIAKHLKGRIGKQCRERWHNHLNPDVKKSSWTEEEDRIIYSAHKRMGNRWAEIAKLLPGRTDNSIKNHWNSTMKRKVEQEGYLQDLMNCDRPSKLQAKSCAAPNHLQAQNQFYIPVQTQIPRYSSLSHDDNCIEIQNSFSFIQQPFVDADDPEKEKRIKELELLLMSAENEVRRKRVPSGSSLTWSESYHMGESMSNTMSHLEEQTHDFYSLDEIPNTSGQQSVEDKILAPEANIVLQPLETIPEFSETLELIDVDTVDWNNIESFELPFTASPAKHTPMKWIHEISPECALNSCLVQADGRGSASRVLSSSPAMPKFYSPPTILRKKKIHPDLSLTPEVRDASNVVLKGTPVKTRQYSPLQLFRSGNVQNHLNLDNLPLTSTPVCGQKISATPLQRQITPKKDKENAGFRTPTIRRSLMAVTPRTPTPFKNALAAQEKKYGPLRTVMQPLIFVEEDIMEVLKKETEKDVFIKEEKESDCKPMKQEHVSTVRKVRKSLILDSCDKEELGADFLAPDEVSQSQNGNTLPTSFLMIPLGERQDQKCDENTDTRKGSVMQRKNYIPATRNVKLQSSVQPLCEWEAVVYGKTEDQLIMTEQARRYLDTYKPTSSSGLRHLIL.

A disordered region spans residues 1–31; it reads MAGRARSEDEEEDGQFTEHDYDVSLQKGPKK. 3 consecutive HTH myb-type domains span residues 30-80, 81-136, and 137-187; these read KKPW…HKVL, SPEL…NPDV, and KKSS…KRKV. DNA-binding regions (H-T-H motif) lie at residues 57-80, 109-132, and 160-183; these read WGVV…HKVL, WSII…HNHL, and WAEI…NSTM. The tract at residues 230–293 is transcriptional activation domain; that stretch reads IPRYSSLSHD…RKRVPSGSSL (64 aa). A negative regulatory domain region spans residues 296–534; sequence SESYHMGESM…IRRSLMAVTP (239 aa).

As to quaternary structure, component of the DREAM complex.

The protein localises to the nucleus. Functionally, transcription factor that specifically recognizes the sequence 5'-YAAC[GT]G-3'. Acts as a master regulator of male meiosis by promoting expression of piRNAs. The piRNA metabolic process mediates the repression of transposable elements during meiosis by forming complexes composed of piRNAs and Piwi proteins and governs the methylation and subsequent repression of transposons, which is essential for the germline integrity. The sequence is that of Myb-related protein A (mybl1) from Xenopus laevis (African clawed frog).